The chain runs to 491 residues: Aspartyl/glutamyl-tRNA(Asn/Gln) amidotransferase subunit B (491 aa).

It belongs to the GatB/GatE family. GatB subfamily. Heterotrimer of A, B and C subunits.

It catalyses the reaction L-glutamyl-tRNA(Gln) + L-glutamine + ATP + H2O = L-glutaminyl-tRNA(Gln) + L-glutamate + ADP + phosphate + H(+). The catalysed reaction is L-aspartyl-tRNA(Asn) + L-glutamine + ATP + H2O = L-asparaginyl-tRNA(Asn) + L-glutamate + ADP + phosphate + 2 H(+). Its function is as follows. Allows the formation of correctly charged Asn-tRNA(Asn) or Gln-tRNA(Gln) through the transamidation of misacylated Asp-tRNA(Asn) or Glu-tRNA(Gln) in organisms which lack either or both of asparaginyl-tRNA or glutaminyl-tRNA synthetases. The reaction takes place in the presence of glutamine and ATP through an activated phospho-Asp-tRNA(Asn) or phospho-Glu-tRNA(Gln). In Paraburkholderia phytofirmans (strain DSM 17436 / LMG 22146 / PsJN) (Burkholderia phytofirmans), this protein is Aspartyl/glutamyl-tRNA(Asn/Gln) amidotransferase subunit B.